Here is a 479-residue protein sequence, read N- to C-terminus: MNFETIIGLEVHVELNTNSKIFSPSSAHFGEDPNANTNVIDWSFPGVLPVMNKGVIDAGIKAALALNMDIHKEMHFDRKNYFYPDNPKAYQISQFDEPIGYNGWIEIKLEDGSTKKIRIERAHLEEDAGKNTHGTDGYSYVDLNRQGVPLIEIVSEADMRSPEEAYAYLTALKEIIQYTGISDVKMEEGSMRVDANISLRPYGQEQFGTKTELKNLNSFSNVRKGLEFEVERQAKLLRSGGAIRQETRRYDEANKGTILMRVKEGAADYRYFPEPDLPLYEIDDAWIDEMRAQLPQFPAQRRAKYEEELGLSAYDASQLTATKALSDFFETAVSLGGDAKQVSNWLQGEVAQFLNAEGKTIEEIALTPENLVEMIAIIADGTISSKMAKKVFVHLAKNGGSARAYVEKAGLVQISDPAVLVPIIHQVFADNEAAVADFKSGKRNADKAFTGFLMKATKGQANPQVAQQLLAQELQKLRD.

It belongs to the GatB/GatE family. GatB subfamily. As to quaternary structure, heterotrimer of A, B and C subunits.

It carries out the reaction L-glutamyl-tRNA(Gln) + L-glutamine + ATP + H2O = L-glutaminyl-tRNA(Gln) + L-glutamate + ADP + phosphate + H(+). The enzyme catalyses L-aspartyl-tRNA(Asn) + L-glutamine + ATP + H2O = L-asparaginyl-tRNA(Asn) + L-glutamate + ADP + phosphate + 2 H(+). Allows the formation of correctly charged Asn-tRNA(Asn) or Gln-tRNA(Gln) through the transamidation of misacylated Asp-tRNA(Asn) or Glu-tRNA(Gln) in organisms which lack either or both of asparaginyl-tRNA or glutaminyl-tRNA synthetases. The reaction takes place in the presence of glutamine and ATP through an activated phospho-Asp-tRNA(Asn) or phospho-Glu-tRNA(Gln). This chain is Aspartyl/glutamyl-tRNA(Asn/Gln) amidotransferase subunit B, found in Streptococcus pyogenes serotype M3 (strain ATCC BAA-595 / MGAS315).